Consider the following 637-residue polypeptide: Palmitoyltransferase Hip14 (637 aa).

Over 1–295 (MYQSACQAAT…SKLRHDKRLR (295 aa)) the chain is Cytoplasmic. 5 ANK repeats span residues 77–106 (ETVT…TVDA), 111–140 (LNAT…DPRI), 144–173 (EGCS…DPDL), 177–207 (GGMT…NPAM), and 212–242 (HGNT…SLDV). The chain crosses the membrane as a helical span at residues 296 to 315 (WWSMVACPFTAFYLAGIVFT). At 316–318 (VNT) the chain is on the lumenal side. The chain crosses the membrane as a helical span at residues 319–341 (LYIIKFFLLGCLYSIFHTIGKAL). At 342–345 (FDEH) the chain is on the cytoplasmic side. Residues 346–366 (LMALLPLSVYLATKAWFYVTW) traverse the membrane as a helical segment. Topologically, residues 367–373 (LMYIDDA) are lumenal. A helical membrane pass occupies residues 374–394 (VSFTATVCFLISSLLLWVCFL). Over 395-472 (KSWKGDPGII…VGNCIGLKNH (78 aa)) the chain is Cytoplasmic. A DHHC domain is found at 430 to 480 (SFCSGCLVRRPIRSKHCSVCDRCVARFDHHCPWVGNCIGLKNHSYFMGFLW). The S-palmitoyl cysteine intermediate role is filled by Cys460. The helical transmembrane segment at 473–493 (SYFMGFLWMLLIMCAWMLYGG) threads the bilayer. Over 494 to 520 (SKYYVNQCNVRFDDFLGAMRAIGNCDA) the chain is Lumenal. The chain crosses the membrane as a helical span at residues 521–541 (WVGWVMGNALLHMSWVILLTI). Topologically, residues 542 to 637 (CQTYQVICLG…DGMAGDHQYV (96 aa)) are cytoplasmic.

The protein belongs to the DHHC palmitoyltransferase family. AKR/ZDHHC17 subfamily. In terms of assembly, interacts with dorsal-ventral patterning protein Sog. As to expression, in stage 13-15 embryos, expressed in the central nervous system. At the third instar larval stage, expressed in the ventral nerve cord and is enriched in the neuropil.

It is found in the golgi apparatus membrane. It localises to the presynaptic cell membrane. The catalysed reaction is L-cysteinyl-[protein] + hexadecanoyl-CoA = S-hexadecanoyl-L-cysteinyl-[protein] + CoA. Probable palmitoyltransferase which is required for photoreceptor synaptic transmission and for the correct expression and localization of palmitoylated protein Csp and synaptosomal-associated protein Snap25. Probably palmitoylates Csp. Probably also palmitoylates the dorsal-ventral patterning protein Sog and promotes its secretion and activity and the stabilization of the membrane-bound form. Required for synaptic vesicle exocytosis. The protein is Palmitoyltransferase Hip14 of Drosophila melanogaster (Fruit fly).